Here is a 319-residue protein sequence, read N- to C-terminus: D-alanine--D-alanine ligase (319 aa).

A disordered region spans residues 1 to 23 (MTGPEWAHTRGTKVGQSSRTPPK). The region spanning 120–313 (KDAFVAAGLP…FGKLCAWMVE (194 aa)) is the ATP-grasp domain. 147-197 (MQPPYVVKPNNEGSSVGVYLVHEAANGPPQLSEDMPQEVMVEAFAPGRELT) contacts ATP. Residues Asp-264, Glu-280, and Asn-282 each coordinate Mg(2+).

It belongs to the D-alanine--D-alanine ligase family. Mg(2+) serves as cofactor. The cofactor is Mn(2+).

It localises to the cytoplasm. The enzyme catalyses 2 D-alanine + ATP = D-alanyl-D-alanine + ADP + phosphate + H(+). The protein operates within cell wall biogenesis; peptidoglycan biosynthesis. Its function is as follows. Cell wall formation. This chain is D-alanine--D-alanine ligase, found in Roseobacter denitrificans (strain ATCC 33942 / OCh 114) (Erythrobacter sp. (strain OCh 114)).